A 135-amino-acid polypeptide reads, in one-letter code: UPF0225 protein CV_3559 (135 aa).

The protein belongs to the UPF0225 family.

The chain is UPF0225 protein CV_3559 from Chromobacterium violaceum (strain ATCC 12472 / DSM 30191 / JCM 1249 / CCUG 213 / NBRC 12614 / NCIMB 9131 / NCTC 9757 / MK).